The following is a 249-amino-acid chain: Small ribosomal subunit protein uS2 (249 aa).

The protein belongs to the universal ribosomal protein uS2 family.

The sequence is that of Small ribosomal subunit protein uS2 from Bordetella parapertussis (strain 12822 / ATCC BAA-587 / NCTC 13253).